Here is a 246-residue protein sequence, read N- to C-terminus: Pyridoxine 5'-phosphate synthase (246 aa).

Asn12 lines the 3-amino-2-oxopropyl phosphate pocket. Residue 14-15 (DH) participates in 1-deoxy-D-xylulose 5-phosphate binding. A 3-amino-2-oxopropyl phosphate-binding site is contributed by Arg23. Catalysis depends on His48, which acts as the Proton acceptor. Residues Arg50 and His55 each contribute to the 1-deoxy-D-xylulose 5-phosphate site. Glu75 functions as the Proton acceptor in the catalytic mechanism. Position 105 (Thr105) interacts with 1-deoxy-D-xylulose 5-phosphate. The Proton donor role is filled by His196. Residues Gly197 and 218 to 219 (GH) contribute to the 3-amino-2-oxopropyl phosphate site.

Belongs to the PNP synthase family. Homooctamer; tetramer of dimers.

The protein localises to the cytoplasm. The enzyme catalyses 3-amino-2-oxopropyl phosphate + 1-deoxy-D-xylulose 5-phosphate = pyridoxine 5'-phosphate + phosphate + 2 H2O + H(+). The protein operates within cofactor biosynthesis; pyridoxine 5'-phosphate biosynthesis; pyridoxine 5'-phosphate from D-erythrose 4-phosphate: step 5/5. Catalyzes the complicated ring closure reaction between the two acyclic compounds 1-deoxy-D-xylulose-5-phosphate (DXP) and 3-amino-2-oxopropyl phosphate (1-amino-acetone-3-phosphate or AAP) to form pyridoxine 5'-phosphate (PNP) and inorganic phosphate. In Pseudomonas putida (strain W619), this protein is Pyridoxine 5'-phosphate synthase.